The sequence spans 127 residues: RxLR effector protein SFI3 (127 aa).

The N-terminal stretch at 1–20 (MRFLLVAVVAMMALVSSSTA) is a signal peptide. The RxLR-dEER signature appears at 40–62 (RSLRNTEERSIAAILAEAGEEDR). Residues 72-107 (WYKAKLTPTQVKTVLGVSQAEMNNVAKQLQRLYLGY) are WY-domain.

Belongs to the RxLR effector family. In terms of assembly, forms an unusual trans-homodimer. Interacts with host UBK.

Its subcellular location is the secreted. The protein localises to the host nucleus. It localises to the host nucleolus. Functionally, effector that suppresses flg22-induced post-translational MAP kinase activation in potato and tomato, but not in Arabidopsis. The perception of highly conserved pathogen- or microbe-associated molecular patterns (PAMPs/MAMPs), such as flg22, triggers converging signaling pathways recruiting MAP kinase cascades and inducing transcriptional re-programming, yielding a generic antimicrobial response. Does not suppress programmed cell death triggered by the P.infestans elicitin infestin-1 (INF1), or by co-expression of tomato Cf4 with Cladosporium fulvum Avr4. Suppresses early pattern-triggered immunity (PTI) via interaction with the U-box-kinase protein UBK, a positive regulator of specific PTI pathways in both potato and Nicotiana benthamiana. This chain is RxLR effector protein SFI3, found in Phytophthora infestans (strain T30-4) (Potato late blight agent).